A 172-amino-acid chain; its full sequence is Stellate protein CG33239/CG33241 (172 aa).

This sequence belongs to the casein kinase 2 subunit beta family. In terms of assembly, interacts in vitro with the casein kinase 2 alpha subunit (CkII-alpha). The relevance of such interaction is however unclear in vivo. In terms of tissue distribution, probably not expressed in wild-type flies. In males lacking the Y chromosome, it is testis-specific and constitutes the main component of star-shaped crystals.

In terms of biological role, unknown. In males lacking the Y chromosome, its strong overexpression leads to the appearance of proteinaceous star-shaped crystals in the primary spermatocytes causing meiotic drive, possibly by interfering with normal casein kinase 2 activity. This Drosophila melanogaster (Fruit fly) protein is Stellate protein CG33239/CG33241 (Ste:CG33239).